The sequence spans 257 residues: Deoxyribose-phosphate aldolase (257 aa).

The active-site Proton donor/acceptor is Asp102. Catalysis depends on Lys166, which acts as the Schiff-base intermediate with acetaldehyde. Lys198 (proton donor/acceptor) is an active-site residue.

The protein belongs to the DeoC/FbaB aldolase family. DeoC type 2 subfamily.

The protein resides in the cytoplasm. The catalysed reaction is 2-deoxy-D-ribose 5-phosphate = D-glyceraldehyde 3-phosphate + acetaldehyde. It participates in carbohydrate degradation; 2-deoxy-D-ribose 1-phosphate degradation; D-glyceraldehyde 3-phosphate and acetaldehyde from 2-deoxy-alpha-D-ribose 1-phosphate: step 2/2. Functionally, catalyzes a reversible aldol reaction between acetaldehyde and D-glyceraldehyde 3-phosphate to generate 2-deoxy-D-ribose 5-phosphate. The chain is Deoxyribose-phosphate aldolase from Shewanella amazonensis (strain ATCC BAA-1098 / SB2B).